We begin with the raw amino-acid sequence, 678 residues long: Sulfoquinovosidase (678 aa).

4 residues coordinate a 6-sulfo-alpha-D-quinovosyldiacylglycerol: Gln288, Arg301, Val302, and Trp304. The active-site Nucleophile is the Asp405. Glu408 is a catalytic residue. The Proton donor role is filled by Asp472. His537 contributes to the a 6-sulfo-alpha-D-quinovosyldiacylglycerol binding site.

The protein belongs to the glycosyl hydrolase 31 family.

The enzyme catalyses a 6-sulfo-alpha-D-quinovosyldiacylglycerol + H2O = 6-sulfo-alpha-D-quinovose + a 1,2-diacyl-sn-glycerol. It carries out the reaction 3-(6-sulfo-alpha-D-quinovosyl)glycerol + H2O = 6-sulfo-alpha-D-quinovose + glycerol. Its pathway is glycolipid metabolism. With respect to regulation, is inactivated in vitro by the mechanism-based inactivator 5-fluoro-beta-L-idopyranosyl fluoride (5FIdoF) that yields a covalent glycosyl-enzyme complex with the active site nucleophile Asp-405. Its function is as follows. Catalyzes the hydrolysis of sulfoquinovosyl diacylglycerides (SQDG) to sulfoquinovose (SQ), which is then degraded by E.coli through the SQ Embden-Meyerhof-Parnas (SQ-EMP) sulfoglycolysis pathway as a source of carbon and sulfur. Therefore, is likely involved in the utilization of the sulfoquinovose headgroup found in ubiquitous plant sulfolipids. Is also able to hydrolyze simple sulfoquinovosides such as sulfoquinovosyl glycerol (SQGro). In vitro, can use the substrate analog para-nitrophenyl alpha-sulfoquinovoside (PNPSQ), but shows no detectable activity toward 4-nitrophenyl alpha-D-glucopyranoside (PNPGlc). Is a retaining glycoside hydrolase, since it forms the alpha anomer of SQ. Also exhibits some alpha-glucosidase activity against alpha-glucosyl fluoride in vitro, although natural substrates, such as alpha-glucobioses are scarcely hydrolyzed. The polypeptide is Sulfoquinovosidase (Escherichia coli (strain K12)).